Here is a 349-residue protein sequence, read N- to C-terminus: Methylglutaconyl-CoA hydratase 1, mitochondrial (349 aa).

The N-terminal 37 residues, 1 to 37 (MPPVSRILSYAPRVAIRPSSQLARPARAFAVGTVRYY), are a transit peptide targeting the mitochondrion.

Belongs to the enoyl-CoA hydratase/isomerase family. Homohexamer.

The protein localises to the mitochondrion. It carries out the reaction (3S)-3-hydroxy-3-methylglutaryl-CoA = 3-methyl-(2E)-glutaconyl-CoA + H2O. It functions in the pathway amino-acid degradation; L-leucine degradation; (S)-3-hydroxy-3-methylglutaryl-CoA from 3-isovaleryl-CoA: step 3/3. In terms of biological role, 3-methylglutaconyl-CoA hydratase that catalyzes the fifth step in the leucine degradation pathway, the reversible hydration of 3-methylglutaconyl-CoA (3-MG-CoA) to 3-hydroxy-3-methylglutaryl-CoA (HMG-CoA). Involved in vegetative growth, conidiation and in the stress response. Controls mitochondrial morphology and mitophagy, which are critical for the infectious growth of the pathogen. The sequence is that of Methylglutaconyl-CoA hydratase 1, mitochondrial from Pyricularia oryzae (strain 70-15 / ATCC MYA-4617 / FGSC 8958) (Rice blast fungus).